Reading from the N-terminus, the 452-residue chain is Flavin-containing monooxygenase FMO GS-OX-like 4 (452 aa).

17–22 provides a ligand contact to FAD; that stretch reads GAGAAG. Position 217–222 (217–222) interacts with NADP(+); sequence GNSASA.

It belongs to the FMO family. Requires FAD as cofactor.

Functionally, catalyzes the conversion of methylthioalkyl glucosinolates of any chain length into methylsulfinylalkyl glucosinolates. This Arabidopsis thaliana (Mouse-ear cress) protein is Flavin-containing monooxygenase FMO GS-OX-like 4.